The primary structure comprises 973 residues: Sensor histidine kinase TmoS (973 aa).

Positions 32 to 103 constitute a PAS 1 domain; sequence REELARIIFD…NQKRLVEAAS (72 aa). One can recognise a PAC 1 domain in the interval 108-162; sequence VRCDIEILGKSGGREVIAVDFSLLPIRDEQENIVFLLAEGRNITDKKKAEAMLAL. The Histidine kinase 1 domain maps to 187–405; sequence KVSHELRTPL…LFQVKLPLNA (219 aa). At His-190 the chain carries Phosphohistidine; by autocatalysis. The region spanning 452 to 567 is the Response regulatory domain; sequence RVLIVEDNPD…ELRARVSNLI (116 aa). Asp-500 bears the 4-aspartylphosphate mark. The region spanning 611–681 is the PAS 2 domain; that stretch reads SEARWKAVYE…QRLARLLQSG (71 aa). The 53-residue stretch at 685–737 folds into the PAC 2 domain; it reads YSVECSYLCKNGSTIWANASVSLMSPRVDEPQVILQIIDDITEKKQAQETLNQ. The region spanning 757–973 is the Histidine kinase 2 domain; sequence YIAHEINQPL…ACFFVSIPVS (217 aa). His-760 carries the phosphohistidine modification.

Post-translationally, autophosphorylated. Activation requires a sequential transfer of a phosphate group from a His in the primary transmitter domain, to an Asp in the receiver domain and to a His in the secondary transmitter domain.

The protein localises to the cytoplasm. The catalysed reaction is ATP + protein L-histidine = ADP + protein N-phospho-L-histidine.. With respect to regulation, activity is regulated by agonists and antagonists. Binding of agonists such as toluene or benzene to TmoS stimulates autophosphorylation. Toluene causes the most pronounced increase, followed by benzene, chlorobenzene and ethylbenzene. Activity is inhibited by antagonists such as o-xylene, o-chlorotoluene and trimethylbenzene isomers, which bind to TmoS but do not stimulate autophosphorylation. Functionally, member of the two-component regulatory system TmoS/TmoT involved in the regulation of toluene degradation. Probably phosphorylates TmoT via a four-step phosphorelay in response to toluene. Can also be induced by benzene and ethylbenzene. In Ectopseudomonas mendocina (Pseudomonas mendocina), this protein is Sensor histidine kinase TmoS (tmoS).